The sequence spans 348 residues: NADH-quinone oxidoreductase subunit H 1 (348 aa).

A run of 8 helical transmembrane segments spans residues Ile-11–Val-31, Phe-83–Ile-103, Val-136–Gly-156, Ser-172–Leu-192, Gly-208–Ala-228, Met-268–Phe-288, Leu-289–Ile-309, and Leu-324–Val-344.

Belongs to the complex I subunit 1 family. NDH-1 is composed of 14 different subunits. Subunits NuoA, H, J, K, L, M, N constitute the membrane sector of the complex.

Its subcellular location is the cell inner membrane. The enzyme catalyses a quinone + NADH + 5 H(+)(in) = a quinol + NAD(+) + 4 H(+)(out). NDH-1 shuttles electrons from NADH, via FMN and iron-sulfur (Fe-S) centers, to quinones in the respiratory chain. The immediate electron acceptor for the enzyme in this species is believed to be ubiquinone. Couples the redox reaction to proton translocation (for every two electrons transferred, four hydrogen ions are translocated across the cytoplasmic membrane), and thus conserves the redox energy in a proton gradient. This subunit may bind ubiquinone. The chain is NADH-quinone oxidoreductase subunit H 1 from Geobacter sulfurreducens (strain ATCC 51573 / DSM 12127 / PCA).